Reading from the N-terminus, the 225-residue chain is Plasma membrane-associated cation-binding protein 1 (225 aa).

Glycine 2 carries the N-myristoyl glycine lipid modification. At threonine 32 the chain carries Phosphothreonine. Phosphoserine is present on serine 107. Basic and acidic residues predominate over residues 140–197 (PVEEVKAEEPAKTEEPAKTEGTSGEKEEIVEETKKGETPETAVVEEKKPEVEEKKEEA). Positions 140 to 225 (PVEEVKAEEP…TAPVAEPPKP (86 aa)) are disordered. Phosphothreonine is present on residues threonine 152 and threonine 177.

Belongs to the DREPP family. Interacts with Turnip mosaic virus (TuMV) P3N-PIPO. Requires Cu(2+) as cofactor. In terms of tissue distribution, mostly expressed in the basal region of hypocotyls. Expressed in seedlings, roots, shoots, stems, leaves (e.g. in epidermis and vascular tissues), flowers (e.g. in pistils and anthers) and siliques (at protein level).

It localises to the cell membrane. Its subcellular location is the cytoplasm. The protein resides in the cytoskeleton. It is found in the cell junction. The protein localises to the plasmodesma. In terms of biological role, may be involved in intracellular signaling through interaction with PtdInsPs and calmodulin (CaM); may keep PtdInsPs attached to the plasma membrane until Ca(2+)-CaM reaches a competitive concentration subsequent to an increase triggered by a stimulus, thus leading to PtdInsPs release and subsequent activation of InsPs-dependent signaling cascade. Interacts competitively at the N-terminus with calcium ions and CaM (in a calcium-dependent manner), and with the phosphatidylinositol phosphates PtdIns(3,4,5)P(3), PtdIns(3,4)P(2), PtdIns(4,5)P(2) and PtdIns(3,5)P(2). Also binds weakly to PtdIns(3)P, PtdIns(4)P and PtdIns(5)P. Negative regulator of hypocotyl cell elongation by destabilizing cortical microtubules in a calcium-dependent manner. Binds directly to and destabilized microtubules to enhance microtubule depolymerization when cytoplasmic calcium increases. In case of Turnip mosaic virus (TuMV) infection, confers sensitivity by promoting viral cell-to-cell movement through interaction with viral P3N-PIPO. In Arabidopsis thaliana (Mouse-ear cress), this protein is Plasma membrane-associated cation-binding protein 1 (PCAP1).